A 300-amino-acid chain; its full sequence is 33 kDa chaperonin (300 aa).

Intrachain disulfides connect C235–C237 and C269–C272.

It belongs to the HSP33 family. In terms of processing, under oxidizing conditions two disulfide bonds are formed involving the reactive cysteines. Under reducing conditions zinc is bound to the reactive cysteines and the protein is inactive.

Its subcellular location is the cytoplasm. In terms of biological role, redox regulated molecular chaperone. Protects both thermally unfolding and oxidatively damaged proteins from irreversible aggregation. Plays an important role in the bacterial defense system toward oxidative stress. This is 33 kDa chaperonin from Pseudomonas fluorescens (strain SBW25).